Here is a 627-residue protein sequence, read N- to C-terminus: Mitochondrial distribution and morphology protein 34 (627 aa).

An SMP-LTD domain is found at Met1 to Leu195. Disordered stretches follow at residues Ser209–Gln230, Ala332–Pro470, Leu486–Ser557, and Arg586–His627. 2 stretches are compositionally biased toward low complexity: residues Pro215–Leu225 and Ala332–Arg341. Residues Arg360–Arg372 are compositionally biased toward basic residues. Residues Val373–Asp384 are compositionally biased toward basic and acidic residues. Over residues Ser390 to Thr412 the composition is skewed to low complexity. Residues Thr436–Ser451 are compositionally biased toward basic and acidic residues. Over residues Pro528–Ser557 the composition is skewed to low complexity.

This sequence belongs to the MDM34 family. Component of the ER-mitochondria encounter structure (ERMES) or MDM complex, composed of MMM1, MDM10, MDM12 and MDM34.

Its subcellular location is the mitochondrion outer membrane. Component of the ERMES/MDM complex, which serves as a molecular tether to connect the endoplasmic reticulum (ER) and mitochondria. Components of this complex are involved in the control of mitochondrial shape and protein biogenesis, and function in nonvesicular lipid trafficking between the ER and mitochondria. MDM34 is required for the interaction of the ER-resident membrane protein MMM1 and the outer mitochondrial membrane-resident beta-barrel protein MDM10. The protein is Mitochondrial distribution and morphology protein 34 of Blastomyces gilchristii (strain SLH14081) (Blastomyces dermatitidis).